Here is a 344-residue protein sequence, read N- to C-terminus: Phosphoribosylformylglycinamidine cyclo-ligase (344 aa).

This sequence belongs to the AIR synthase family.

It is found in the cytoplasm. The catalysed reaction is 2-formamido-N(1)-(5-O-phospho-beta-D-ribosyl)acetamidine + ATP = 5-amino-1-(5-phospho-beta-D-ribosyl)imidazole + ADP + phosphate + H(+). It functions in the pathway purine metabolism; IMP biosynthesis via de novo pathway; 5-amino-1-(5-phospho-D-ribosyl)imidazole from N(2)-formyl-N(1)-(5-phospho-D-ribosyl)glycinamide: step 2/2. The protein is Phosphoribosylformylglycinamidine cyclo-ligase of Glaesserella parasuis serovar 5 (strain SH0165) (Haemophilus parasuis).